We begin with the raw amino-acid sequence, 101 residues long: Small ribosomal subunit protein uS14 (101 aa).

This sequence belongs to the universal ribosomal protein uS14 family. As to quaternary structure, part of the 30S ribosomal subunit. Contacts proteins S3 and S10.

In terms of biological role, binds 16S rRNA, required for the assembly of 30S particles and may also be responsible for determining the conformation of the 16S rRNA at the A site. The protein is Small ribosomal subunit protein uS14 of Stenotrophomonas maltophilia (strain K279a).